We begin with the raw amino-acid sequence, 198 residues long: Tumor necrosis factor receptor superfamily member 22 (198 aa).

The Cytoplasmic portion of the chain corresponds to M1–R20. Residues L21 to L41 form a helical; Signal-anchor for type II membrane protein membrane-spanning segment. Over E42–R198 the chain is Extracellular. TNFR-Cys repeat units follow at residues K47–C82, K84–C124, and Q125–C165. Intrachain disulfides connect C48-C59, C60-C73, C63-C82, C85-C100, C103-C116, C106-C124, C126-C141, C144-C157, and C147-C165. Residue N62 is glycosylated (N-linked (GlcNAc...) asparagine). N158 carries N-linked (GlcNAc...) asparagine glycosylation.

Ubiquitous.

It is found in the cell membrane. It localises to the secreted. Its function is as follows. Receptor for the cytotoxic ligand TNFSF10/TRAIL. Lacks a cytoplasmic death domain and hence is not capable of inducing apoptosis. Protects cells against TRAIL mediated apoptosis possibly through ligand competition. Cannot induce the NF-kappa-B pathway. The sequence is that of Tumor necrosis factor receptor superfamily member 22 (Tnfrsf22) from Mus musculus (Mouse).